Reading from the N-terminus, the 207-residue chain is High frequency lysogenization protein HflD homolog (207 aa).

This sequence belongs to the HflD family.

The protein localises to the cytoplasm. It localises to the cell inner membrane. The sequence is that of High frequency lysogenization protein HflD homolog from Methylococcus capsulatus (strain ATCC 33009 / NCIMB 11132 / Bath).